Reading from the N-terminus, the 84-residue chain is Small ribosomal subunit protein eS27w (84 aa).

The C4-type zinc finger occupies 39–61 (CQGCFNITTVFSHSQTVVVCGNC).

This sequence belongs to the eukaryotic ribosomal protein eS27 family. The cofactor is Zn(2+).

This Arabidopsis thaliana (Mouse-ear cress) protein is Small ribosomal subunit protein eS27w (RPS27D).